Here is a 1580-residue protein sequence, read N- to C-terminus: Ras GTPase-activating protein raskol (1580 aa).

Ser164 carries the phosphoserine modification. Phosphothreonine is present on Thr167. The interval 197–223 is disordered; sequence LKRTKSVTKLERTKRGSGGLRGSRSHE. Phosphoserine occurs at positions 221 and 224. The PH domain maps to 233–291; the sequence is STIDLSCTGAVGVAPVHQSVLGRRHCFQVRGGPRGERYYSCGSRQERDLWIYSLRKSIA. Residues 282-400 form the C2 domain; it reads WIYSLRKSIA…TSRLPCEQWY (119 aa). Residues 490–700 form the Ras-GAP domain; the sequence is GLAGAFLTDV…ARMQQFLEII (211 aa). Disordered stretches follow at residues 764-819, 857-892, 904-1023, 1112-1218, 1284-1313, 1334-1443, and 1561-1580; these read GMGT…QPQH, LLQQ…HQHP, AGNQ…SYDD, ANHH…QQFG, LSGG…YGRL, VGYG…LGKS, and YETQ…QKPQ. Residues 776–805 are compositionally biased toward polar residues; that stretch reads ATSSTHSIASENQENRNPGSSGSHAGSNSE. 3 stretches are compositionally biased toward low complexity: residues 806–818, 857–885, and 926–939; these read QLLP…AQPQ, LLQQ…GHQQ, and SSSL…LLHG. The span at 940-954 shows a compositional bias: basic residues; it reads HQQHAHHPQQLHPHH. Over residues 987–1020 the composition is skewed to low complexity; the sequence is TSTPSSTRSRTLPRNGNPNANGNVGSSNNNQSGS. A compositionally biased stretch (polar residues) spans 1140–1150; sequence SAKSSHCSSGY. The segment covering 1151-1169 has biased composition (low complexity); that stretch reads QSISTNPSPSQSSSPVESQ. Phosphoserine is present on residues Ser1158 and Ser1164. Polar residues predominate over residues 1186–1206; it reads PSYQLQPQTGSSRSSAQSNTH. Composition is skewed to low complexity over residues 1207-1216, 1285-1299, and 1351-1362; these read QQQQQQQQQQ, SGGS…ASTS, and HQQQQNPMQQQQ. The span at 1363–1372 shows a compositional bias: basic and acidic residues; sequence QRERDQEHKQ. Over residues 1374 to 1388 the composition is skewed to low complexity; the sequence is AGSVAGSVGSATSAA. Positions 1396-1415 are enriched in polar residues; that stretch reads SARTLSDSSTDTEGHCNQLQ. Ser1401 and Ser1403 each carry phosphoserine. The segment covering 1427 to 1438 has biased composition (gly residues); sequence GGSGGGGAGSEQ. A compositionally biased stretch (low complexity) spans 1563 to 1580; the sequence is TQQQQQQHQAPPKTQKPQ.

The protein resides in the cytoplasm. It is found in the cell membrane. It localises to the apical cell membrane. Functionally, GTPase-activating protein, which acts as a negative regulator for some members of the Ras family. Probably decreases their signaling activity by stimulating their intrinsic GTPase activity, thereby lowering the levels of the GTP-bound active form. Functions with DE-cadherin (shg) to promote embryonic border cell (BC) migration and adhesion by regulating the distribution of actin protrusions in BCs. Promotes shg-mediated adhesion at the BC interfaces and likely maintains BC cluster adhesion during BC detachment from the follicular epithelium and subsequent BC migration. Also required for restricting the development of actin-rich protrusions to the front of migrating BC clusters thus ensuring unidirectional BC migration. Possibly functions by suppressing Rac1 signaling in non-leading BCs, thus limiting its activity to leading BCs where it initiates localized actin cytoskeleton remodeling to produce the polarized protrusions. This is Ras GTPase-activating protein raskol from Drosophila melanogaster (Fruit fly).